The following is an 802-amino-acid chain: Leucine--tRNA ligase (802 aa).

A 'HIGH' region motif is present at residues 40–51; the sequence is PYPSGAGLHVGH. The 'KMSKS' region signature appears at 576 to 580; that stretch reads KMSKS. Lysine 579 lines the ATP pocket.

The protein belongs to the class-I aminoacyl-tRNA synthetase family.

Its subcellular location is the cytoplasm. The catalysed reaction is tRNA(Leu) + L-leucine + ATP = L-leucyl-tRNA(Leu) + AMP + diphosphate. The sequence is that of Leucine--tRNA ligase from Bacillus cereus (strain G9842).